A 102-amino-acid polypeptide reads, in one-letter code: Cytochrome b (102 aa).

Transmembrane regions (helical) follow at residues 1-21 (FGSLLGVCLITQILTGLFLAM), 45-66 (WLIRNIHTNGASLFFICIYMHI), and 81-101 (WNIGVILFLMTMATAFMGYVF). H51 and H65 together coordinate heme b.

Belongs to the cytochrome b family. In terms of assembly, the cytochrome bc1 complex contains 3 respiratory subunits (MT-CYB, CYC1 and UQCRFS1), 2 core proteins (UQCRC1 and UQCRC2) and probably 6 low-molecular weight proteins. Heme b is required as a cofactor.

Its subcellular location is the mitochondrion inner membrane. Functionally, component of the ubiquinol-cytochrome c reductase complex (complex III or cytochrome b-c1 complex) that is part of the mitochondrial respiratory chain. The b-c1 complex mediates electron transfer from ubiquinol to cytochrome c. Contributes to the generation of a proton gradient across the mitochondrial membrane that is then used for ATP synthesis. In Plethodon yonahlossee (Yonahlossee salamander), this protein is Cytochrome b (mt-cyb).